The sequence spans 234 residues: Peptidase E (234 aa).

Residues serine 120, aspartate 135, and histidine 157 each act as charge relay system in the active site.

It belongs to the peptidase S51 family.

The protein resides in the cytoplasm. The catalysed reaction is Dipeptidase E catalyzes the hydrolysis of dipeptides Asp-|-Xaa. It does not act on peptides with N-terminal Glu, Asn or Gln, nor does it cleave isoaspartyl peptides.. In terms of biological role, hydrolyzes dipeptides containing N-terminal aspartate residues. May play a role in allowing the cell to use peptide aspartate to spare carbon otherwise required for the synthesis of the aspartate family of amino acids. In Salmonella gallinarum (strain 287/91 / NCTC 13346), this protein is Peptidase E.